The following is a 254-amino-acid chain: Dihydroorotate dehydrogenase B (NAD(+)), electron transfer subunit (254 aa).

Residues 1–99 enclose the FAD-binding FR-type domain; it reads MLQTEMKVIQ…LGPLGKGFDL (99 aa). FAD contacts are provided by residues 50 to 53, 67 to 69, and 74 to 75; these read RPIS, LYR, and GT. Residues C218, C223, C226, and C241 each coordinate [2Fe-2S] cluster.

This sequence belongs to the PyrK family. Heterotetramer of 2 PyrK and 2 PyrD type B subunits. It depends on [2Fe-2S] cluster as a cofactor. Requires FAD as cofactor.

It functions in the pathway pyrimidine metabolism; UMP biosynthesis via de novo pathway; orotate from (S)-dihydroorotate (NAD(+) route): step 1/1. Responsible for channeling the electrons from the oxidation of dihydroorotate from the FMN redox center in the PyrD type B subunit to the ultimate electron acceptor NAD(+). The sequence is that of Dihydroorotate dehydrogenase B (NAD(+)), electron transfer subunit from Listeria innocua serovar 6a (strain ATCC BAA-680 / CLIP 11262).